Consider the following 255-residue polypeptide: Adenosylcobinamide-GDP ribazoletransferase (255 aa).

The next 6 helical transmembrane spans lie at 43–63 (LVGTLLGLLCVLVYAFASLFF), 64–84 (PYQVAIVLMMAFSLLLTGAFH), 113–133 (IGTYGSATLTMALIGKFVFLT), 141–161 (FGLMIVVAYTLSRAVAATLIY), 195–215 (LAAISLGLGVGLLLILFAILF), and 234–254 (CLGGAQQLMELGIYLVLIAVV).

The protein belongs to the CobS family. It depends on Mg(2+) as a cofactor.

It localises to the cell inner membrane. It catalyses the reaction alpha-ribazole + adenosylcob(III)inamide-GDP = adenosylcob(III)alamin + GMP + H(+). It carries out the reaction alpha-ribazole 5'-phosphate + adenosylcob(III)inamide-GDP = adenosylcob(III)alamin 5'-phosphate + GMP + H(+). It participates in cofactor biosynthesis; adenosylcobalamin biosynthesis; adenosylcobalamin from cob(II)yrinate a,c-diamide: step 7/7. Functionally, joins adenosylcobinamide-GDP and alpha-ribazole to generate adenosylcobalamin (Ado-cobalamin). Also synthesizes adenosylcobalamin 5'-phosphate from adenosylcobinamide-GDP and alpha-ribazole 5'-phosphate. This is Adenosylcobinamide-GDP ribazoletransferase from Vibrio vulnificus (strain CMCP6).